The sequence spans 79 residues: WAP four-disulfide core domain protein 10A (79 aa).

Positions 1 to 21 are cleaved as a signal peptide; that stretch reads MAPQTLLPVLVLCVLLLQAQG. The region spanning 34 to 79 is the WAP domain; it reads LSPEIKVCQQQPKLYLCKHLCESHRDCQANNICCSTYCGNVCMSIL. Disulfide bonds link C41/C67, C50/C71, C54/C66, and C60/C75.

The protein resides in the secreted. The protein is WAP four-disulfide core domain protein 10A (WFDC10A) of Homo sapiens (Human).